Consider the following 48-residue polypeptide: Delta-ctenitoxin-Pn1b (48 aa).

5 disulfides stabilise this stretch: C1-C15, C8-C21, C12-C48, C14-C31, and C23-C29.

This sequence belongs to the neurotoxin 03 (Tx2) family. 05 subfamily. As to expression, expressed by the venom gland.

Its subcellular location is the secreted. In terms of biological role, insecticidal neurotoxin that reversibly inhibits the N-methyl-D-aspartate (NMDA)-subtype of ionotropic glutamate receptor (GRIN) and inhibits inactivation of insect sodium channels (Nav). Inhibits glutamate uptake in rat brain synaptosomes. In vivo, induces immediate excitatory effects when injected intrathoracically in houseflies and cockroaches. In Phoneutria nigriventer (Brazilian armed spider), this protein is Delta-ctenitoxin-Pn1b.